Reading from the N-terminus, the 82-residue chain is UPF0213 protein SSP2268 (82 aa).

The 76-residue stretch at 2–77 folds into the GIY-YIG domain; sequence DKHYIYIVKC…KTFSRQKKLK (76 aa).

The protein belongs to the UPF0213 family.

This Staphylococcus saprophyticus subsp. saprophyticus (strain ATCC 15305 / DSM 20229 / NCIMB 8711 / NCTC 7292 / S-41) protein is UPF0213 protein SSP2268.